Consider the following 380-residue polypeptide: Probable inorganic pyrophosphatase (380 aa).

Mg(2+)-binding residues include Asp198, Asp203, and Asp235.

It belongs to the PPase family. It depends on Mg(2+) as a cofactor.

It carries out the reaction diphosphate + H2O = 2 phosphate + H(+). The sequence is that of Probable inorganic pyrophosphatase from Plasmodium falciparum (isolate 3D7).